The primary structure comprises 272 residues: GEM-like protein 5 (272 aa).

The interval methionine 1 to histidine 42 is disordered. Residues glutamate 16 to proline 27 are compositionally biased toward basic and acidic residues. The region spanning serine 143–valine 221 is the GRAM domain.

Belongs to the GEM family.

In Arabidopsis thaliana (Mouse-ear cress), this protein is GEM-like protein 5.